The sequence spans 614 residues: ATP-dependent zinc metalloprotease FtsH (614 aa).

Residues 1–5 (MLPIR) are Cytoplasmic-facing. A helical membrane pass occupies residues 6–26 (WFLALLAVFLAVAGLDLWFSQ). Residues 27–127 (TGARPSSATG…AVSARERTAS (101 aa)) lie on the Periplasmic side of the membrane. A helical membrane pass occupies residues 128-148 (IVHAIVHPLGLITLIVGILFV). Over 149–614 (VQRYAGRFTA…AQHPPSALAG (466 aa)) the chain is Cytoplasmic. 214-221 (GPPGTGKT) contributes to the ATP binding site. Position 436 (H436) interacts with Zn(2+). E437 is an active-site residue. Zn(2+) contacts are provided by H440 and D513.

It in the central section; belongs to the AAA ATPase family. This sequence in the C-terminal section; belongs to the peptidase M41 family. As to quaternary structure, homohexamer. The cofactor is Zn(2+).

It localises to the cell inner membrane. Functionally, acts as a processive, ATP-dependent zinc metallopeptidase for both cytoplasmic and membrane proteins. Plays a role in the quality control of integral membrane proteins. This chain is ATP-dependent zinc metalloprotease FtsH, found in Opitutus terrae (strain DSM 11246 / JCM 15787 / PB90-1).